We begin with the raw amino-acid sequence, 404 residues long: Dual-specificity RNA methyltransferase RlmN (404 aa).

Glu118 (proton acceptor) is an active-site residue. A Radical SAM core domain is found at 125–357; sequence VGRAGALCVS…NKAGYSSPIR (233 aa). Cysteines 132 and 368 form a disulfide. Residues Cys139, Cys143, and Cys146 each coordinate [4Fe-4S] cluster. Residues 194-195, Ser226, 248-250, and Asn325 each bind S-adenosyl-L-methionine; these read GE and SLH. Cys368 acts as the S-methylcysteine intermediate in catalysis.

It belongs to the radical SAM superfamily. RlmN family. The cofactor is [4Fe-4S] cluster.

It localises to the cytoplasm. It carries out the reaction adenosine(2503) in 23S rRNA + 2 reduced [2Fe-2S]-[ferredoxin] + 2 S-adenosyl-L-methionine = 2-methyladenosine(2503) in 23S rRNA + 5'-deoxyadenosine + L-methionine + 2 oxidized [2Fe-2S]-[ferredoxin] + S-adenosyl-L-homocysteine. It catalyses the reaction adenosine(37) in tRNA + 2 reduced [2Fe-2S]-[ferredoxin] + 2 S-adenosyl-L-methionine = 2-methyladenosine(37) in tRNA + 5'-deoxyadenosine + L-methionine + 2 oxidized [2Fe-2S]-[ferredoxin] + S-adenosyl-L-homocysteine. Its function is as follows. Specifically methylates position 2 of adenine 2503 in 23S rRNA and position 2 of adenine 37 in tRNAs. m2A2503 modification seems to play a crucial role in the proofreading step occurring at the peptidyl transferase center and thus would serve to optimize ribosomal fidelity. The polypeptide is Dual-specificity RNA methyltransferase RlmN (Caulobacter vibrioides (strain ATCC 19089 / CIP 103742 / CB 15) (Caulobacter crescentus)).